The sequence spans 510 residues: ATP synthase subunit alpha (510 aa).

170-177 (GDRQTGKT) is an ATP binding site.

This sequence belongs to the ATPase alpha/beta chains family. F-type ATPases have 2 components, CF(1) - the catalytic core - and CF(0) - the membrane proton channel. CF(1) has five subunits: alpha(3), beta(3), gamma(1), delta(1), epsilon(1). CF(0) has three main subunits: a(1), b(2) and c(9-12). The alpha and beta chains form an alternating ring which encloses part of the gamma chain. CF(1) is attached to CF(0) by a central stalk formed by the gamma and epsilon chains, while a peripheral stalk is formed by the delta and b chains.

Its subcellular location is the cell inner membrane. It carries out the reaction ATP + H2O + 4 H(+)(in) = ADP + phosphate + 5 H(+)(out). Produces ATP from ADP in the presence of a proton gradient across the membrane. The alpha chain is a regulatory subunit. The sequence is that of ATP synthase subunit alpha from Caulobacter vibrioides (strain ATCC 19089 / CIP 103742 / CB 15) (Caulobacter crescentus).